A 92-amino-acid polypeptide reads, in one-letter code: MSAEVALVYRVLPDSVEVNIDKLKTDIINKLSPKYKVDKVEVEEIGFGIKALRFYIRMPESEEYSSDEVEELLRSVEGVGGYELEYFSRLSF.

The protein belongs to the EF-1-beta/EF-1-delta family.

Functionally, promotes the exchange of GDP for GTP in EF-1-alpha/GDP, thus allowing the regeneration of EF-1-alpha/GTP that could then be used to form the ternary complex EF-1-alpha/GTP/AAtRNA. This Pyrobaculum arsenaticum (strain DSM 13514 / JCM 11321 / PZ6) protein is Elongation factor 1-beta.